Consider the following 1060-residue polypeptide: Desmoglein-1-beta (1060 aa).

Residues 1–23 (MDWHSFRIAALLLTSLVVLEVNS) form the signal peptide. Positions 24 to 49 (EFQIQVRDHNAKNGTIKWHSIRRQKR) are excised as a propeptide. Cadherin domains follow at residues 50-157 (EWIK…PPVF), 158-269 (SMTT…IPYL), 270-389 (EQSS…RPGS), and 386-493 (RPGS…PGSD). At 50–567 (EWIKFAAACR…ITEDNVHFGP (518 aa)) the chain is on the extracellular side. Asn110 is a glycosylation site (N-linked (GlcNAc...) (high mannose) asparagine). An N-linked (GlcNAc...) asparagine glycan is attached at Asn180. The interval 490-560 (PGSDGGGSSS…PEPEPFDITE (71 aa)) is disordered. The segment covering 492–503 (SDGGGSSSGSGG) has biased composition (gly residues). Residues 510–519 (NGYQGTSTVG) show a composition bias toward polar residues. A compositionally biased stretch (gly residues) spans 525 to 537 (GSGGVTSSGGGSG). Residues 549–560 (DEPEPEPFDITE) show a composition bias toward acidic residues. Residues 568 to 588 (AGIGLLIMGFLVLGLVPFLLI) traverse the membrane as a helical segment. Residues 589–1060 (CCDCGGAPGG…TKYSTVQYSK (472 aa)) lie on the Cytoplasmic side of the membrane. Over residues 792–801 (PDPDSSWPPQ) the composition is skewed to low complexity. Positions 792–811 (PDPDSSWPPQSTEPMCPQST) are disordered. 5 Desmoglein repeat repeats span residues 835–861 (AYPS…TVRE), 862–891 (SYAT…ERVV), 892–921 (GPVP…ERVI), 922–949 (APGS…ERVI), and 950–978 (QPTS…ERVV).

Interacts with DSC3; there is evidence to suggest that the interaction promotes cell-cell adhesion of keratinocytes. As to expression, expressed in epidermis.

It is found in the cell membrane. The protein localises to the cell junction. It localises to the desmosome. Its subcellular location is the cytoplasm. The protein resides in the nucleus. In terms of biological role, component of intercellular desmosome junctions. Involved in the interaction of plaque proteins and intermediate filaments mediating cell-cell adhesion. The protein is Desmoglein-1-beta (Dsg1b) of Mus musculus (Mouse).